The primary structure comprises 242 residues: Methylthioribulose-1-phosphate dehydratase (242 aa).

A compositionally biased stretch (basic and acidic residues) spans 1–11 (MAQEIQKENND). Residues 1–20 (MAQEIQKENNDHLVQSSDPE) form a disordered region. Cysteine 100 provides a ligand contact to substrate. Positions 117 and 119 each coordinate Zn(2+). The active-site Proton donor/acceptor is the glutamate 146. Histidine 202 contributes to the Zn(2+) binding site.

It belongs to the aldolase class II family. MtnB subfamily. The cofactor is Zn(2+).

It is found in the cytoplasm. It carries out the reaction 5-(methylsulfanyl)-D-ribulose 1-phosphate = 5-methylsulfanyl-2,3-dioxopentyl phosphate + H2O. The protein operates within amino-acid biosynthesis; L-methionine biosynthesis via salvage pathway; L-methionine from S-methyl-5-thio-alpha-D-ribose 1-phosphate: step 2/6. In terms of biological role, catalyzes the dehydration of methylthioribulose-1-phosphate (MTRu-1-P) into 2,3-diketo-5-methylthiopentyl-1-phosphate (DK-MTP-1-P). In Aspergillus niger (strain ATCC MYA-4892 / CBS 513.88 / FGSC A1513), this protein is Methylthioribulose-1-phosphate dehydratase.